The primary structure comprises 133 residues: Fatty acid-binding protein, heart (133 aa).

Valine 2 is modified (N-acetylvaline). Residue threonine 8 is modified to Phosphothreonine. Tyrosine 20 is modified (phosphotyrosine; by Tyr-kinases). A Phosphoserine modification is found at serine 23. Residue threonine 30 is modified to Phosphothreonine. A Phosphoserine modification is found at serine 83. 127 to 129 (RTY) lines the (9Z)-octadecenoate pocket. 127 to 129 (RTY) is a hexadecanoate binding site. 127-129 (RTY) serves as a coordination point for octadecanoate.

The protein belongs to the calycin superfamily. Fatty-acid binding protein (FABP) family.

Its subcellular location is the cytoplasm. FABPs are thought to play a role in the intracellular transport of long-chain fatty acids and their acyl-CoA esters. The sequence is that of Fatty acid-binding protein, heart (FABP3) from Homo sapiens (Human).